A 199-amino-acid polypeptide reads, in one-letter code: B3 domain-containing protein Os06g0107800 (199 aa).

The interval 13–32 is disordered; it reads QLQGGGGGHGGGGGGGGGER. A compositionally biased stretch (gly residues) spans 15 to 29; sequence QGGGGGHGGGGGGGG. The segment at residues 37 to 141 is a DNA-binding region (TF-B3); that stretch reads FEKVVTPSDV…RLFIDCRKRA (105 aa).

It localises to the nucleus. This chain is B3 domain-containing protein Os06g0107800, found in Oryza sativa subsp. japonica (Rice).